The primary structure comprises 282 residues: sn-glycerol-3-phosphate transport system permease protein UgpE (282 aa).

Helical transmembrane passes span Leu-14–Ser-34, Met-86–Phe-106, Met-112–Pro-132, Tyr-146–Leu-168, Ile-201–Leu-221, and Trp-248–Leu-268. One can recognise an ABC transmembrane type-1 domain in the interval Leu-78–Met-269.

It belongs to the binding-protein-dependent transport system permease family. The complex is composed of two ATP-binding proteins (UgpC), two transmembrane proteins (UgpA and UgpE) and a solute-binding protein (UgpB).

It localises to the cell inner membrane. In terms of biological role, part of the ABC transporter complex UgpBAEC involved in sn-glycerol-3-phosphate (G3P) import. Probably responsible for the translocation of the substrate across the membrane. This is sn-glycerol-3-phosphate transport system permease protein UgpE (ugpE) from Brucella suis biovar 1 (strain 1330).